Here is a 281-residue protein sequence, read N- to C-terminus: MCAAAPRGGGRAARRLGAATAGSRVPSAAPRYSRRTRRVPIAYEAEPKPESPGPKWEPENWQQQLERIREMRRHRDAPVDEMGVDKCYDTSAPPQVMRYQVLLSLMLSSQTKDQVTSAAMLRLRQRGLTVDSILQMDDATLGQIIYPVGFWRNKVKYIKQTTAILKQKYGGDIPGTVEELVKLPGVGPKMAHLAMNIAWNSVSGIAVDTHVHRITNRLKWVKKETRYPEETRVALEDWLPRDLWREINWLLVGFGQQTCLPVNPRCKECLNQDICPTAKRF.

The transit peptide at 1-17 (MCAAAPRGGGRAARRLG) directs the protein to the mitochondrion. Residues 1-60 (MCAAAPRGGGRAARRLGAATAGSRVPSAAPRYSRRTRRVPIAYEAEPKPESPGPKWEPEN) are disordered. Residues 15-24 (RLGAATAGSR) are compositionally biased toward low complexity. One can recognise a HhH domain in the interval 168–192 (KYGGDIPGTVEELVKLPGVGPKMAH). The active-site Nucleophile; for N-glycosylase activity is the K189. C259, C266, C269, and C275 together coordinate [4Fe-4S] cluster.

This sequence belongs to the Nth/MutY family. Requires [4Fe-4S] cluster as cofactor.

The protein resides in the nucleus. It localises to the mitochondrion. It carries out the reaction 2'-deoxyribonucleotide-(2'-deoxyribose 5'-phosphate)-2'-deoxyribonucleotide-DNA = a 3'-end 2'-deoxyribonucleotide-(2,3-dehydro-2,3-deoxyribose 5'-phosphate)-DNA + a 5'-end 5'-phospho-2'-deoxyribonucleoside-DNA + H(+). In terms of biological role, bifunctional DNA N-glycosylase with associated apurinic/apyrimidinic (AP) lyase function that catalyzes the first step in base excision repair (BER), the primary repair pathway for the repair of oxidative DNA damage. The DNA N-glycosylase activity releases the damaged DNA base from DNA by cleaving the N-glycosidic bond, leaving an AP site. The AP lyase activity cleaves the phosphodiester bond 3' to the AP site by a beta-elimination. Primarily recognizes and repairs oxidative base damage of pyrimidines. The chain is Endonuclease III-like protein 1 from Gallus gallus (Chicken).